We begin with the raw amino-acid sequence, 292 residues long: NAD kinase (292 aa).

Aspartate 74 functions as the Proton acceptor in the catalytic mechanism. NAD(+)-binding positions include 74-75 (DG), 147-148 (NE), aspartate 177, and 188-193 (TGYSLS).

The protein belongs to the NAD kinase family. Requires a divalent metal cation as cofactor.

It is found in the cytoplasm. The enzyme catalyses NAD(+) + ATP = ADP + NADP(+) + H(+). Involved in the regulation of the intracellular balance of NAD and NADP, and is a key enzyme in the biosynthesis of NADP. Catalyzes specifically the phosphorylation on 2'-hydroxyl of the adenosine moiety of NAD to yield NADP. This is NAD kinase from Cytophaga hutchinsonii (strain ATCC 33406 / DSM 1761 / CIP 103989 / NBRC 15051 / NCIMB 9469 / D465).